The primary structure comprises 431 residues: Adenylosuccinate synthetase (431 aa).

GTP is bound by residues 13–19 and 41–43; these read GDEGKGK and GHT. Asp-14 acts as the Proton acceptor in catalysis. 2 residues coordinate Mg(2+): Asp-14 and Gly-41. Residues 14 to 17, 39 to 42, Thr-130, Arg-144, Gln-225, Thr-240, and Arg-304 contribute to the IMP site; these read DEGK and NAGH. The active-site Proton donor is the His-42. Residue 300 to 306 coordinates substrate; that stretch reads TTTGRSR. Residues Arg-306, 332–334, and 414–416 each bind GTP; these read KLD and STG.

Belongs to the adenylosuccinate synthetase family. In terms of assembly, homodimer. It depends on Mg(2+) as a cofactor.

It is found in the cytoplasm. It catalyses the reaction IMP + L-aspartate + GTP = N(6)-(1,2-dicarboxyethyl)-AMP + GDP + phosphate + 2 H(+). It participates in purine metabolism; AMP biosynthesis via de novo pathway; AMP from IMP: step 1/2. Its function is as follows. Plays an important role in the de novo pathway of purine nucleotide biosynthesis. Catalyzes the first committed step in the biosynthesis of AMP from IMP. The chain is Adenylosuccinate synthetase from Marinobacter nauticus (strain ATCC 700491 / DSM 11845 / VT8) (Marinobacter aquaeolei).